We begin with the raw amino-acid sequence, 121 residues long: Large ribosomal subunit protein bL17 (121 aa).

This sequence belongs to the bacterial ribosomal protein bL17 family. As to quaternary structure, part of the 50S ribosomal subunit. Contacts protein L32.

The protein is Large ribosomal subunit protein bL17 of Sulfurihydrogenibium sp. (strain YO3AOP1).